Here is a 350-residue protein sequence, read N- to C-terminus: Histidinol-phosphate aminotransferase 1 (350 aa).

Lysine 211 carries the N6-(pyridoxal phosphate)lysine modification.

It belongs to the class-II pyridoxal-phosphate-dependent aminotransferase family. Histidinol-phosphate aminotransferase subfamily. In terms of assembly, homodimer. Pyridoxal 5'-phosphate is required as a cofactor.

The catalysed reaction is L-histidinol phosphate + 2-oxoglutarate = 3-(imidazol-4-yl)-2-oxopropyl phosphate + L-glutamate. It participates in amino-acid biosynthesis; L-histidine biosynthesis; L-histidine from 5-phospho-alpha-D-ribose 1-diphosphate: step 7/9. This chain is Histidinol-phosphate aminotransferase 1, found in Trichormus variabilis (strain ATCC 29413 / PCC 7937) (Anabaena variabilis).